The following is a 256-amino-acid chain: Thiazole synthase (256 aa).

The active-site Schiff-base intermediate with DXP is the K95. 1-deoxy-D-xylulose 5-phosphate is bound by residues G156, 182 to 183 (AG), and 204 to 205 (NT).

Belongs to the ThiG family. In terms of assembly, homotetramer. Forms heterodimers with either ThiH or ThiS.

Its subcellular location is the cytoplasm. It catalyses the reaction [ThiS sulfur-carrier protein]-C-terminal-Gly-aminoethanethioate + 2-iminoacetate + 1-deoxy-D-xylulose 5-phosphate = [ThiS sulfur-carrier protein]-C-terminal Gly-Gly + 2-[(2R,5Z)-2-carboxy-4-methylthiazol-5(2H)-ylidene]ethyl phosphate + 2 H2O + H(+). Its pathway is cofactor biosynthesis; thiamine diphosphate biosynthesis. Functionally, catalyzes the rearrangement of 1-deoxy-D-xylulose 5-phosphate (DXP) to produce the thiazole phosphate moiety of thiamine. Sulfur is provided by the thiocarboxylate moiety of the carrier protein ThiS. In vitro, sulfur can be provided by H(2)S. The protein is Thiazole synthase of Escherichia coli (strain 55989 / EAEC).